A 20-amino-acid polypeptide reads, in one-letter code: FFPIILGLVPKLVCLITKKC.

A disulfide bond links Cys-14 and Cys-20.

Expressed by the skin glands.

It localises to the secreted. Its function is as follows. Antimicrobial peptide. The polypeptide is Brevinin-1LT (Rana latastei (Italian agile frog)).